A 359-amino-acid polypeptide reads, in one-letter code: Mineralocorticoid receptor (359 aa).

Residues 1 to 49 (FKRAVEGQHNYLCAGRNDCIIDKIRRKNCPACRVRKCLQAGMNLGARKS) constitute a DNA-binding region (nuclear receptor). Cys-13, Cys-19, Cys-29, and Cys-32 together coordinate Zn(2+). Residues 13-37 (CAGRNDCIIDKIRRKNCPACRVRKC) form an NR C4-type zinc finger. Residues 48–96 (KSKKPGKLKGVNEDSTPTKEGGQTCPGSGGGYLSSGEKELSTSPTNALV) are disordered. Residues 50-107 (KKPGKLKGVNEDSTPTKEGGQTCPGSGGGYLSSGEKELSTSPTNALVPHGPGGGLVTP) form a hinge region. Positions 108-339 (YLPPSICSVL…EFPEMLVEII (232 aa)) constitute an NR LBD domain. Residues Asn-145 and Gln-151 each coordinate 21-hydroxyprogesterone. Aldosterone contacts are provided by Asn-145 and Gln-151. Progesterone is bound by residues Asn-145 and Gln-151. An important for coactivator binding region spans residues 157 to 160 (KWAK). Residues Arg-192 and Thr-320 each contribute to the 21-hydroxyprogesterone site. The aldosterone site is built by Arg-192 and Thr-320. The progesterone site is built by Arg-192 and Thr-320.

Belongs to the nuclear hormone receptor family. NR3 subfamily.

The protein localises to the cytoplasm. It localises to the nucleus. Receptor for both mineralocorticoids (MC) such as cortisol. Binds to mineralocorticoid response elements (MRE) and transactivates target genes. The effect of MC is to increase ion and water transport and thus raise extracellular fluid volume and blood pressure and lower potassium levels. This Oncorhynchus mykiss (Rainbow trout) protein is Mineralocorticoid receptor (nr3c2).